A 512-amino-acid polypeptide reads, in one-letter code: Replication initiation protein (512 aa).

In terms of biological role, essential for replication. Binds specifically to a 60-bp region corresponding to the putative origin of replication of pXO2. Also binds nonspecifically to single-stranded DNA with lower affinity. This Bacillus anthracis protein is Replication initiation protein (repS).